Reading from the N-terminus, the 290-residue chain is Glycine--tRNA ligase alpha subunit (290 aa).

This sequence belongs to the class-II aminoacyl-tRNA synthetase family. Tetramer of two alpha and two beta subunits.

Its subcellular location is the cytoplasm. The enzyme catalyses tRNA(Gly) + glycine + ATP = glycyl-tRNA(Gly) + AMP + diphosphate. The chain is Glycine--tRNA ligase alpha subunit from Gloeobacter violaceus (strain ATCC 29082 / PCC 7421).